A 436-amino-acid polypeptide reads, in one-letter code: UPF0597 protein YhaM (436 aa).

The protein belongs to the UPF0597 family.

The chain is UPF0597 protein YhaM from Shigella boydii serotype 18 (strain CDC 3083-94 / BS512).